Consider the following 331-residue polypeptide: Putative T-box protein 36 (331 aa).

Positions 29 to 210 (EITKKQWNQL…MNRFSRKRKY (182 aa)) form a DNA-binding region, T-box.

It localises to the nucleus. The protein is Putative T-box protein 36 (tbx-36) of Caenorhabditis elegans.